The chain runs to 443 residues: Glutamate-1-semialdehyde 2,1-aminomutase (443 aa).

Lys277 carries the N6-(pyridoxal phosphate)lysine modification.

The protein belongs to the class-III pyridoxal-phosphate-dependent aminotransferase family. HemL subfamily. Homodimer. Requires pyridoxal 5'-phosphate as cofactor.

Its subcellular location is the cytoplasm. It carries out the reaction (S)-4-amino-5-oxopentanoate = 5-aminolevulinate. It participates in porphyrin-containing compound metabolism; protoporphyrin-IX biosynthesis; 5-aminolevulinate from L-glutamyl-tRNA(Glu): step 2/2. In Pseudarthrobacter chlorophenolicus (strain ATCC 700700 / DSM 12829 / CIP 107037 / JCM 12360 / KCTC 9906 / NCIMB 13794 / A6) (Arthrobacter chlorophenolicus), this protein is Glutamate-1-semialdehyde 2,1-aminomutase.